The sequence spans 413 residues: THAP domain-containing protein 5 (413 aa).

The THAP-type zinc finger occupies 1 to 85; it reads MPRYCAASYC…LKHTAVPTIF (85 aa). Residues 84-118 are disordered; it reads IFSSPDDEEKGSSQNSPQEIRREDQEETTKNVESK. Basic and acidic residues predominate over residues 102-118; the sequence is EIRREDQEETTKNVESK. Positions 375–399 form a coiled coil; that stretch reads RLRSLEALIGQLKQENLLSEEKLKI.

Its subcellular location is the nucleus. The polypeptide is THAP domain-containing protein 5 (THAP5) (Gallus gallus (Chicken)).